Reading from the N-terminus, the 122-residue chain is Movement protein TGB2 (122 aa).

Over 1–12 (MVKSTVPTRPNK) the chain is Cytoplasmic. The helical transmembrane segment at 13 to 33 (YWPGVVAIGLVSLFIFLSVSN) threads the bilayer. The Lumenal portion of the chain corresponds to 34-76 (QKHSTTSGDNIHKFSNGGTYRDGSKCITYNRNSPLAYNGSSSN). Residues 77-97 (NTLFWLCLLGLSMVWIAYCGY) traverse the membrane as a helical segment. At 98–122 (KSLSGQWHSCQHDKNERNFLFECFE) the chain is on the cytoplasmic side.

Belongs to the virgaviridae/benyvirus TGB2 movement protein family. Interacts with movement protein TGB3. TGB1-TGB3-TGB2 complex formation is enhanced by ATP hydrolysis.

The protein resides in the host cell junction. It localises to the host plasmodesma. It is found in the host endoplasmic reticulum membrane. Its subcellular location is the host cytoplasm. The protein localises to the host cytoskeleton. Functionally, participates in the transport of viral genome to neighboring plant cells directly through plasmodesmata, without any budding. TGBp2 and TGBp3 are necessary for intracellular delivery of TGBp1-containing vRNPs to plasmodesmata. Can gate plasmodesmata and increase their size exclusion limit. To a lesser extent than TGB3, induces host actin cytoskeleton network thickening, which probably plays a major role in virus cell-to-cell movement. This is Movement protein TGB2 from Peanut clump virus (isolate 87/TGTA2) (PCV).